We begin with the raw amino-acid sequence, 309 residues long: Anamorsin homolog (309 aa).

The segment at 4–169 is N-terminal SAM-like domain; that stretch reads VSPGHSVLLL…SYEVGSSAQL (166 aa). Residues 170–218 form a linker region; the sequence is TLSFAKKKQVEKPKLDENTAKIWSLSAVDMNDDDIDLLDPDELLDEEDL. [2Fe-2S] cluster contacts are provided by Cys230, Cys242, Cys245, and Cys247. The interval 230 to 247 is fe-S binding site A; it reads CGTGGDTKKRKACKNCTC. Positions 270, 273, 281, and 284 each coordinate [4Fe-4S] cluster. Short sequence motifs (cx2C motif) lie at residues 270 to 273 and 281 to 284; these read CGNC and CASC. A fe-S binding site B region spans residues 270–284; that stretch reads CGNCYLGDAFRCASC.

Belongs to the anamorsin family. Monomer. The cofactor is [2Fe-2S] cluster. It depends on [4Fe-4S] cluster as a cofactor.

It localises to the cytoplasm. Its subcellular location is the mitochondrion intermembrane space. Component of the cytosolic iron-sulfur (Fe-S) protein assembly (CIA) machinery. Required for the maturation of extramitochondrial Fe-S proteins. Part of an electron transfer chain functioning in an early step of cytosolic Fe-S biogenesis, facilitating the de novo assembly of a [4Fe-4S] cluster on the cytosolic Fe-S scaffold complex. Electrons are transferred from NADPH via a FAD- and FMN-containing diflavin oxidoreductase. Together with the diflavin oxidoreductase, also required for the assembly of the diferric tyrosyl radical cofactor of ribonucleotide reductase (RNR), probably by providing electrons for reduction during radical cofactor maturation in the catalytic small subunit. The polypeptide is Anamorsin homolog (Branchiostoma floridae (Florida lancelet)).